A 233-amino-acid polypeptide reads, in one-letter code: Large ribosomal subunit protein uL1 (233 aa).

It belongs to the universal ribosomal protein uL1 family. As to quaternary structure, part of the 50S ribosomal subunit.

Binds directly to 23S rRNA. The L1 stalk is quite mobile in the ribosome, and is involved in E site tRNA release. In terms of biological role, protein L1 is also a translational repressor protein, it controls the translation of the L11 operon by binding to its mRNA. This chain is Large ribosomal subunit protein uL1, found in Campylobacter jejuni subsp. doylei (strain ATCC BAA-1458 / RM4099 / 269.97).